Here is a 221-residue protein sequence, read N- to C-terminus: Redox-sensing transcriptional repressor Rex (221 aa).

The segment at residues 17–56 is a DNA-binding region (H-T-H motif); sequence IYYYYLSSLHEAGIKRINSTEISEAIKFDAATVRRDFSYF. 91–96 contributes to the NAD(+) binding site; sequence GTGNLG.

Belongs to the transcriptional regulatory Rex family. As to quaternary structure, homodimer.

The protein resides in the cytoplasm. In terms of biological role, modulates transcription in response to changes in cellular NADH/NAD(+) redox state. The sequence is that of Redox-sensing transcriptional repressor Rex from Oenococcus oeni (strain ATCC BAA-331 / PSU-1).